A 92-amino-acid polypeptide reads, in one-letter code: Signal peptidase complex subunit 1 (92 aa).

Residues Met-1 to Leu-12 lie on the Cytoplasmic side of the membrane. Residues Met-13 to Thr-30 form a helical membrane-spanning segment. The Lumenal portion of the chain corresponds to Thr-31–Thr-36. Residues Met-37–Tyr-59 form a helical membrane-spanning segment. Residues Asn-60–Lys-92 lie on the Cytoplasmic side of the membrane. A disordered region spans residues Glu-73–Lys-92.

This sequence belongs to the SPCS1 family. Component of the signal peptidase complex (SPC) composed of a catalytic subunit SEC11 and three accessory subunits SPCS1, SPCS2 and SPCS3. The complex induces a local thinning of the ER membrane which is used to measure the length of the signal peptide (SP) h-region of protein substrates. This ensures the selectivity of the complex towards h-regions shorter than 18-20 amino acids.

The protein localises to the endoplasmic reticulum membrane. In terms of biological role, component of the signal peptidase complex (SPC) which catalyzes the cleavage of N-terminal signal sequences from nascent proteins as they are translocated into the lumen of the endoplasmic reticulum. Dispensable for SPC enzymatic activity. In Arabidopsis thaliana (Mouse-ear cress), this protein is Signal peptidase complex subunit 1.